The chain runs to 445 residues: MQGLYIKSYGCQMNVYDSLIIENIIKPLGFSIVNEPSEADIVILNTCHIREKAAEKLYSELGRIRKIQETKNLTIVVAGCVAQAEGTEIFTRAPFVDIVVGPQSIHTLPELIVKARKIKKQIINIDFPVISKFDAIAVEEYTKNQKVSAFISVQEGCNKFCSFCVVPYTRGEEYSRTVEAIFKEALILADSGIKEITLIGQNVNAYHGTYKGNEWDLGRLIQHIAKISSIERIYYTTSHPRDMHESLYEAHGIEKKLIPFIHLPVQSGSNKILRKMNRKHTAEEYINIIKTLRKHRSDIAYSSDFIVGFPGETDEDFENTIQLIEEVKFSQAYSFKYSPRPGTPSAEYTSQIPDEIKSQRLTKLQELVHKQQLEFNKKMIGETHPVLFYKKGKFDNQIIGKTPYMQSCYINTENPDLYYNKIVPIKITDAHKNHLTGIIPNTLPV.

In terms of domain architecture, MTTase N-terminal spans 2–117 (QGLYIKSYGC…LPELIVKARK (116 aa)). Residues Cys-11, Cys-47, Cys-80, Cys-157, Cys-161, and Cys-164 each coordinate [4Fe-4S] cluster. The Radical SAM core domain maps to 143 to 374 (KNQKVSAFIS…QELVHKQQLE (232 aa)). The region spanning 377–441 (KKMIGETHPV…KNHLTGIIPN (65 aa)) is the TRAM domain.

It belongs to the methylthiotransferase family. MiaB subfamily. As to quaternary structure, monomer. It depends on [4Fe-4S] cluster as a cofactor.

It localises to the cytoplasm. It catalyses the reaction N(6)-dimethylallyladenosine(37) in tRNA + (sulfur carrier)-SH + AH2 + 2 S-adenosyl-L-methionine = 2-methylsulfanyl-N(6)-dimethylallyladenosine(37) in tRNA + (sulfur carrier)-H + 5'-deoxyadenosine + L-methionine + A + S-adenosyl-L-homocysteine + 2 H(+). Its function is as follows. Catalyzes the methylthiolation of N6-(dimethylallyl)adenosine (i(6)A), leading to the formation of 2-methylthio-N6-(dimethylallyl)adenosine (ms(2)i(6)A) at position 37 in tRNAs that read codons beginning with uridine. The protein is tRNA-2-methylthio-N(6)-dimethylallyladenosine synthase of Ehrlichia ruminantium (strain Welgevonden).